Reading from the N-terminus, the 424-residue chain is 3-phosphoshikimate 1-carboxyvinyltransferase (424 aa).

3-phosphoshikimate contacts are provided by Lys21, Ser22, and Arg26. Lys21 lines the phosphoenolpyruvate pocket. The phosphoenolpyruvate site is built by Gly91 and Arg119. Residues Ser164, Gln166, Asp310, and Lys337 each contribute to the 3-phosphoshikimate site. Gln166 provides a ligand contact to phosphoenolpyruvate. Asp310 serves as the catalytic Proton acceptor. Phosphoenolpyruvate-binding residues include Arg341 and Arg382.

It belongs to the EPSP synthase family. As to quaternary structure, monomer.

It localises to the cytoplasm. It carries out the reaction 3-phosphoshikimate + phosphoenolpyruvate = 5-O-(1-carboxyvinyl)-3-phosphoshikimate + phosphate. It participates in metabolic intermediate biosynthesis; chorismate biosynthesis; chorismate from D-erythrose 4-phosphate and phosphoenolpyruvate: step 6/7. Functionally, catalyzes the transfer of the enolpyruvyl moiety of phosphoenolpyruvate (PEP) to the 5-hydroxyl of shikimate-3-phosphate (S3P) to produce enolpyruvyl shikimate-3-phosphate and inorganic phosphate. In Campylobacter curvus (strain 525.92), this protein is 3-phosphoshikimate 1-carboxyvinyltransferase.